The sequence spans 623 residues: UvrABC system protein C (623 aa).

Residues 12-91 form the GIY-YIG domain; that stretch reads FSPGVYLYKD…IKQYKPRFNI (80 aa). One can recognise a UVR domain in the interval 201-236; it reads SDLARGLRARMEAASLEMRFEEAAGLRDLITTVEEI. Positions 604–623 are disordered; that stretch reads PVASVAQSEDAAPDVPDPQA.

The protein belongs to the UvrC family. Interacts with UvrB in an incision complex.

The protein resides in the cytoplasm. Its function is as follows. The UvrABC repair system catalyzes the recognition and processing of DNA lesions. UvrC both incises the 5' and 3' sides of the lesion. The N-terminal half is responsible for the 3' incision and the C-terminal half is responsible for the 5' incision. The chain is UvrABC system protein C from Solibacter usitatus (strain Ellin6076).